The sequence spans 389 residues: Glutamate 5-kinase (389 aa).

Residue Lys-16 participates in ATP binding. Residues Ser-56, Asp-143, and Asn-155 each contribute to the substrate site. 175–176 is an ATP binding site; sequence SD. The 78-residue stretch at 281–358 folds into the PUA domain; that stretch reads AGELHVDEGA…AEIEAILGYA (78 aa).

It belongs to the glutamate 5-kinase family.

The protein localises to the cytoplasm. It catalyses the reaction L-glutamate + ATP = L-glutamyl 5-phosphate + ADP. The protein operates within amino-acid biosynthesis; L-proline biosynthesis; L-glutamate 5-semialdehyde from L-glutamate: step 1/2. In terms of biological role, catalyzes the transfer of a phosphate group to glutamate to form L-glutamate 5-phosphate. This is Glutamate 5-kinase from Rhizobium etli (strain ATCC 51251 / DSM 11541 / JCM 21823 / NBRC 15573 / CFN 42).